An 819-amino-acid polypeptide reads, in one-letter code: DNA replication licensing factor Mcm3 (819 aa).

Residues 290-496 form the MCM domain; the sequence is IFELLSKSLA…DVDQMISDHV (207 aa). Residues glutamine 348, leucine 388, glutamate 389, alanine 390, and alanine 392 each coordinate ADP. The Arginine finger signature appears at 472 to 475; the sequence is SRFD. Serine 522 is subject to Phosphoserine. The residue at position 538 (tyrosine 538) is a Phosphotyrosine. Residues 655 to 717 form a disordered region; sequence DRPSKRRRNS…DAGDLTRRET (63 aa). Phosphoserine is present on residues serine 664, serine 666, serine 680, and serine 682. Residues threonine 690 and threonine 692 each carry the phosphothreonine modification. Phosphoserine is present on residues serine 697, serine 735, and serine 739.

It belongs to the MCM family. In terms of assembly, component of the Mcm2-7 complex. The complex forms a toroidal hexameric ring with the proposed subunit order Mcm2-Mcm6-Mcm4-Mcm7-Mcm3-Mcm5.

Its subcellular location is the nucleus. It localises to the chromosome. The catalysed reaction is ATP + H2O = ADP + phosphate + H(+). Functionally, acts as a component of the Mcm2-7 complex (Mcm complex) (Mcm complex) which is the putative replicative helicase essential for 'once per cell cycle' DNA replication initiation and elongation in eukaryotic cells. Core component of CDC45-MCM-GINS (CMG) helicase, the molecular machine that unwinds template DNA during replication, and around which the replisome is built. The active ATPase sites in the Mcm2-7 ring are formed through the interaction surfaces of two neighboring subunits such that a critical structure of a conserved arginine finger motif is provided in trans relative to the ATP-binding site of the Walker A box of the adjacent subunit. The six ATPase active sites, however, are likely to contribute differentially to the complex helicase activity. The polypeptide is DNA replication licensing factor Mcm3 (Mcm3) (Drosophila melanogaster (Fruit fly)).